A 304-amino-acid chain; its full sequence is Aspartate carbamoyltransferase catalytic subunit (304 aa).

Arginine 49 and threonine 50 together coordinate carbamoyl phosphate. Lysine 77 provides a ligand contact to L-aspartate. Arginine 99, histidine 127, and glutamine 130 together coordinate carbamoyl phosphate. L-aspartate contacts are provided by arginine 160 and arginine 211. Residues alanine 252 and proline 253 each coordinate carbamoyl phosphate.

The protein belongs to the aspartate/ornithine carbamoyltransferase superfamily. ATCase family. Heterododecamer (2C3:3R2) of six catalytic PyrB chains organized as two trimers (C3), and six regulatory PyrI chains organized as three dimers (R2).

It carries out the reaction carbamoyl phosphate + L-aspartate = N-carbamoyl-L-aspartate + phosphate + H(+). It participates in pyrimidine metabolism; UMP biosynthesis via de novo pathway; (S)-dihydroorotate from bicarbonate: step 2/3. In terms of biological role, catalyzes the condensation of carbamoyl phosphate and aspartate to form carbamoyl aspartate and inorganic phosphate, the committed step in the de novo pyrimidine nucleotide biosynthesis pathway. This chain is Aspartate carbamoyltransferase catalytic subunit, found in Bacillus cereus (strain G9842).